We begin with the raw amino-acid sequence, 124 residues long: MMNMLLVSLGAVAGAILRWQLAVWFNPFLTQFAFGTLFVNLCGCFLIGITLGVNLQDAQKLLFVTGFLGSFTTFSSFSAEVSQFILSEKYWRGLAVISAHLIGGLVLTILGILVAKFWVSGRFY.

The next 4 helical transmembrane spans lie at 5–25, 32–52, 61–81, and 94–114; these read LLVS…AVWF, FAFG…ITLG, LLFV…SAEV, and LAVI…GILV. Residues Gly69 and Thr72 each contribute to the Na(+) site.

Belongs to the fluoride channel Fluc/FEX (TC 1.A.43) family.

Its subcellular location is the cell inner membrane. The catalysed reaction is fluoride(in) = fluoride(out). Na(+) is not transported, but it plays an essential structural role and its presence is essential for fluoride channel function. Functionally, fluoride-specific ion channel. Important for reducing fluoride concentration in the cell, thus reducing its toxicity. In Haemophilus ducreyi (strain 35000HP / ATCC 700724), this protein is Fluoride-specific ion channel FluC.